Here is an 827-residue protein sequence, read N- to C-terminus: MSLTRRDFIKANAVAATAAAAGIATPAIAQPAKANIRWDKGVCRFCGTGCAVLVGVQDGRVVATQGDPDSPVNRGLNCIKGYFLSKIMYGEDRLTKPLLRMKNGKFDKNGEFQPISWDQAFDIMAEKWKEQLKKPDGVTRVGMFGSGQWTIWEGYAASKLFKAGFRSNNLDPNARHCMASAVAGFMRTFGIDEPMGCYDDIEQTDAFVLWGSNMAEMHPILWSRVTDRRLTHEGCKVAVLSTFEHRSFELADIPMVFTPQTDLAILNYICHYIISKNAYDKDFIEKHVNFKKGATDIGYGLRPTHALEKDQANAATPDKSDPMTFDEFKAFVAEYTLEKVAKLSGVPADKLEALAKLYADPKVKVVSFWTMGFNQHARGTWVNNMIYNVHLLMGKISEPGNSPFSLTGQPSACGTAREVGTFAHRLPADMVVMNDKHREITEGLWKLPPGTLNPKIGYHAVLQHRMLKDGKLNAYWVMCTNNMQTAPNMNEEGYPGYRNPANFIVVSDPYPTVTALAADLILPTAMWMEKEGAYGNAERRTQFWRQQVKAPGEAKSDLWQIMEFSKRFKIEEVWPEELLAKKPELRGKTLFDVLYKNGQVDKFPATDIQAGFENDEAKAFGFYPQKGLFEEYASFGRGHAHDLAPFEAYHKARGLRWPVVDGKETLWRFREGYDPYVKAGEGVKFYGKPDGKAWIFALPYQPAAESPDKEFDLWLSTGRVLEHWHSGSMTRRVPELHKSVPNAVLYMHPNDAAKRNLRNGDVVKVASRRGEVTTRIDTRGRNKPPEGLVFMPFFDESQLVNKLTLDATCPISKETDYKKCAVKVSKA.

The tat-type signal signal peptide spans 1-34 (MSLTRRDFIKANAVAATAAAAGIATPAIAQPAKA). In terms of domain architecture, 4Fe-4S Mo/W bis-MGD-type spans 36–92 (IRWDKGVCRFCGTGCAVLVGVQDGRVVATQGDPDSPVNRGLNCIKGYFLSKIMYGED). The [4Fe-4S] cluster site is built by Cys43, Cys46, Cys50, and Cys78. Mo-bis(molybdopterin guanine dinucleotide) contacts are provided by residues Lys80, Gln148, Asn173, Cys177, 210 to 217 (WGSNMAEM), 241 to 245 (STFEH), 260 to 262 (QTD), Met371, Gln375, Asn481, 507 to 508 (SD), Lys530, Asp557, and 717 to 726 (TGRVLEHWHS). Substrate is bound at residue Phe793. Mo-bis(molybdopterin guanine dinucleotide) is bound by residues Asn801 and Lys818.

Belongs to the prokaryotic molybdopterin-containing oxidoreductase family. NasA/NapA/NarB subfamily. Component of the periplasmic nitrate reductase NapAB complex composed of NapA and NapB. It depends on [4Fe-4S] cluster as a cofactor. Mo-bis(molybdopterin guanine dinucleotide) is required as a cofactor. Post-translationally, predicted to be exported by the Tat system. The position of the signal peptide cleavage has not been experimentally proven.

It is found in the periplasm. It catalyses the reaction 2 Fe(II)-[cytochrome] + nitrate + 2 H(+) = 2 Fe(III)-[cytochrome] + nitrite + H2O. Functionally, catalytic subunit of the periplasmic nitrate reductase complex NapAB. Receives electrons from NapB and catalyzes the reduction of nitrate to nitrite. This Paramagnetospirillum magneticum (strain ATCC 700264 / AMB-1) (Magnetospirillum magneticum) protein is Periplasmic nitrate reductase.